Reading from the N-terminus, the 807-residue chain is Dual specificity protein kinase YAK1 (807 aa).

Positions 1-19 are enriched in low complexity; it reads MNSSNNNDSSSSNSNMNNS. The segment at 1–84 is disordered; it reads MNSSNNNDSS…QQQQQQQQNS (84 aa). Over residues 20–31 the composition is skewed to polar residues; sequence LSPTLVTHSDAS. At Ser-38 the chain carries Phosphoserine. The span at 55 to 84 shows a compositional bias: low complexity; it reads NQGSQRSPQQQHQNHHQQQQQQQQQQQQNS. Phosphoserine occurs at positions 115, 118, and 127. Positions 124-180 are disordered; the sequence is RRKSSLVVPPARAPAPNPFQYDSYPAYTSSNTSLAGNSSGQYPSGYQQQQQQVYQQG. The span at 149–160 shows a compositional bias: polar residues; sequence AYTSSNTSLAGN. Low complexity predominate over residues 161–180; that stretch reads SSGQYPSGYQQQQQQVYQQG. A Phosphoserine modification is found at Ser-206. Residues 214 to 224 show a composition bias toward low complexity; the sequence is SNFSSLNSNTN. Residues 214–254 are disordered; sequence SNFSSLNSNTNQGTNSIPVMSPYRRLSAYPPSTSPPLQPPF. 3 positions are modified to phosphoserine: Ser-240, Ser-245, and Ser-247. A Phosphothreonine modification is found at Thr-288. Residue Ser-295 is modified to Phosphoserine. One can recognise a Protein kinase domain in the interval 369 to 704; that stretch reads YLVLDILGQG…PQQAMLHPFI (336 aa). ATP contacts are provided by residues 375 to 383 and Lys-398; that span reads LGQGTFGQV. The active-site Proton acceptor is Asp-496. A Phosphotyrosine modification is found at Tyr-530. The segment at 714-758 is disordered; that stretch reads FPPGSSLPGPSEKHDDAKGQQSEYGSANDSSNNAGHNYVYNPSSA. Residues 732–758 show a composition bias toward polar residues; the sequence is GQQSEYGSANDSSNNAGHNYVYNPSSA.

Belongs to the protein kinase superfamily. CMGC Ser/Thr protein kinase family. MNB/DYRK subfamily. Post-translationally, phosphorylated; highly.

It is found in the cytoplasm. The protein resides in the nucleus. It catalyses the reaction L-seryl-[protein] + ATP = O-phospho-L-seryl-[protein] + ADP + H(+). The catalysed reaction is L-threonyl-[protein] + ATP = O-phospho-L-threonyl-[protein] + ADP + H(+). The enzyme catalyses L-tyrosyl-[protein] + ATP = O-phospho-L-tyrosyl-[protein] + ADP + H(+). Functionally, negative regulator of the cell cycle acting downstream of the cAMP-dependent protein kinase. Part of a glucose-sensing system involved in growth control in response to glucose availability. Phosphorylates POP2. This Saccharomyces cerevisiae (strain ATCC 204508 / S288c) (Baker's yeast) protein is Dual specificity protein kinase YAK1 (YAK1).